The chain runs to 75 residues: Sec-independent protein translocase protein TatA (75 aa).

A helical transmembrane segment spans residues 1 to 21 (MGSFSIWHWLIVLVIIALVFG). The disordered stretch occupies residues 45 to 75 (DASADKPADQVTQQRVSDDTIDVQAKEKSNS).

It belongs to the TatA/E family. The Tat system comprises two distinct complexes: a TatABC complex, containing multiple copies of TatA, TatB and TatC subunits, and a separate TatA complex, containing only TatA subunits. Substrates initially bind to the TatABC complex, which probably triggers association of the separate TatA complex to form the active translocon.

It localises to the cell inner membrane. Functionally, part of the twin-arginine translocation (Tat) system that transports large folded proteins containing a characteristic twin-arginine motif in their signal peptide across membranes. TatA could form the protein-conducting channel of the Tat system. This Bordetella bronchiseptica (strain ATCC BAA-588 / NCTC 13252 / RB50) (Alcaligenes bronchisepticus) protein is Sec-independent protein translocase protein TatA.